The chain runs to 270 residues: Hydroxyethylthiazole kinase (270 aa).

Met-46 lines the substrate pocket. ATP-binding residues include Arg-120 and Thr-166. Gly-193 lines the substrate pocket.

This sequence belongs to the Thz kinase family. Mg(2+) serves as cofactor.

It carries out the reaction 5-(2-hydroxyethyl)-4-methylthiazole + ATP = 4-methyl-5-(2-phosphooxyethyl)-thiazole + ADP + H(+). The protein operates within cofactor biosynthesis; thiamine diphosphate biosynthesis; 4-methyl-5-(2-phosphoethyl)-thiazole from 5-(2-hydroxyethyl)-4-methylthiazole: step 1/1. Its function is as follows. Catalyzes the phosphorylation of the hydroxyl group of 4-methyl-5-beta-hydroxyethylthiazole (THZ). In Herpetosiphon aurantiacus (strain ATCC 23779 / DSM 785 / 114-95), this protein is Hydroxyethylthiazole kinase.